Consider the following 300-residue polypeptide: Protoheme IX farnesyltransferase (300 aa).

9 helical membrane-spanning segments follow: residues 24-44 (VTQL…PGMV), 48-68 (VLLG…AINC), 94-114 (LQIL…LYTF), 118-138 (LTMW…TLLL), 146-166 (IVIG…AVTG), 172-192 (AWIL…VLAL), 217-237 (LHIL…FISG), 239-259 (SGAV…AYAW), and 278-298 (IVYL…RPVI).

The protein belongs to the UbiA prenyltransferase family. Protoheme IX farnesyltransferase subfamily.

The protein localises to the cell inner membrane. It carries out the reaction heme b + (2E,6E)-farnesyl diphosphate + H2O = Fe(II)-heme o + diphosphate. It participates in porphyrin-containing compound metabolism; heme O biosynthesis; heme O from protoheme: step 1/1. Converts heme B (protoheme IX) to heme O by substitution of the vinyl group on carbon 2 of heme B porphyrin ring with a hydroxyethyl farnesyl side group. The polypeptide is Protoheme IX farnesyltransferase (Burkholderia thailandensis (strain ATCC 700388 / DSM 13276 / CCUG 48851 / CIP 106301 / E264)).